The chain runs to 727 residues: Malate synthase G (727 aa).

Residues Val117, 124 to 125 (RY), Ser275, and Arg312 contribute to the acetyl-CoA site. Residue Arg339 is the Proton acceptor of the active site. Glyoxylate is bound by residues Arg339, Glu431, and 456 to 459 (GFLD). Residues Glu431 and Asp459 each contribute to the Mg(2+) site. An acetyl-CoA-binding site is contributed by Pro540. At Cys616 the chain carries Cysteine sulfenic acid (-SOH). Asp630 functions as the Proton donor in the catalytic mechanism.

The protein belongs to the malate synthase family. GlcB subfamily. As to quaternary structure, monomer. Mg(2+) serves as cofactor.

The protein resides in the cytoplasm. The catalysed reaction is glyoxylate + acetyl-CoA + H2O = (S)-malate + CoA + H(+). It participates in carbohydrate metabolism; glyoxylate cycle; (S)-malate from isocitrate: step 2/2. Functionally, involved in the glycolate utilization. Catalyzes the condensation and subsequent hydrolysis of acetyl-coenzyme A (acetyl-CoA) and glyoxylate to form malate and CoA. The sequence is that of Malate synthase G from Halalkalibacterium halodurans (strain ATCC BAA-125 / DSM 18197 / FERM 7344 / JCM 9153 / C-125) (Bacillus halodurans).